The chain runs to 359 residues: MNILMLSPEHPDEPKSGLGVHLNRLISYLNPHINITVFTPSGQLFSYAKFEDYIADANFTMVRHVLSHNKRFDLIHAHDDTTAPAAQYLKQRLGLPLAATIHGLESERKKVCREAPHPYRLMTERLLIESADALIVLSTFMKRSLDKAAHKKITVIPSPASMEEEKGKIPRSMNRRFLFSYGRFVPEKGLSQLLKVFAILKQRQPDLYLVLAGEGPSLSCYEKLAAAYNLKDRVMFLPFLNRKDIRTLLSHCEMAVFPSSYEPFGLAAQESMEQGVLTVVSQSGGFCDYAVHDKTAIIADFTLVQEAADLLDSFLKDREKARRIKEAGRQQVFKLHHPRLIMSSYLQLYERIFNNSAIH.

This sequence belongs to the glycosyltransferase group 1 family. Glycosyltransferase 4 subfamily.

This is an uncharacterized protein from Bacillus subtilis (strain 168).